Consider the following 283-residue polypeptide: Protein-S-isoprenylcysteine O-methyltransferase (283 aa).

The Cytoplasmic portion of the chain corresponds to 1-15 (MAAARRGSAGSEARL). The helical transmembrane segment at 16–32 (SLATFLLGASVLALPLL) threads the bilayer. At 33–40 (TRAGLQGR) the chain is on the lumenal side. A helical membrane pass occupies residues 41–58 (TGLALYVAGLNALLLLLY). At 59–68 (RPPRYQIAIR) the chain is on the cytoplasmic side. The chain crosses the membrane as a helical span at residues 69–86 (ACFLGFVFGCGVLLSFSQ). Residues 87 to 91 (SSWNH) are Lumenal-facing. A helical transmembrane segment spans residues 92–111 (FGWYVCSLSLFHYSEYLVTA). At 112–130 (VNNPKSLSLDSFLLNHSLE) the chain is on the cytoplasmic side. The chain crosses the membrane as a helical span at residues 131 to 148 (YTVAALSSWIEFTLENIF). Residues 149 to 153 (WPELK) lie on the Lumenal side of the membrane. Residues 154 to 173 (QITWLSATGLLMVVFGECLR) form a helical membrane-spanning segment. At 174 to 211 (KAAMFTAGSNFNHVVQSEKSDTHTLVTSGVYAWCRHPS) the chain is on the cytoplasmic side. S-adenosyl-L-methionine is bound by residues Q189, 196-199 (HTLV), Y204, and 209-212 (HPSY). Residues 212–227 (YVGWFYWSIGTQVMLC) traverse the membrane as a helical segment. N228 is a topological domain (lumenal). The helical transmembrane segment at 229–243 (PICGVVYALTVWRFF) threads the bilayer. Residues 244 to 283 (RDRTEEEEISLIHFFGEEYLDYKKRVPTGLPFIKGVKVEL) lie on the Cytoplasmic side of the membrane. R246 contributes to the substrate binding site. Position 250 (E250) interacts with S-adenosyl-L-methionine.

It belongs to the class VI-like SAM-binding methyltransferase superfamily. Isoprenylcysteine carboxyl methyltransferase family. Highly enriched in adult cerebellum, with a low level expression in other brain regions.

Its subcellular location is the endoplasmic reticulum membrane. It carries out the reaction [protein]-C-terminal S-[(2E,6E)-farnesyl]-L-cysteine + S-adenosyl-L-methionine = [protein]-C-terminal S-[(2E,6E)-farnesyl]-L-cysteine methyl ester + S-adenosyl-L-homocysteine. Its function is as follows. Catalyzes the post-translational methylation of isoprenylated C-terminal cysteine residues. This is Protein-S-isoprenylcysteine O-methyltransferase (Icmt) from Mus musculus (Mouse).